The sequence spans 357 residues: 5-hydroxytryptamine receptor 5A (357 aa).

Residues 1–36 (MDLPVNLTSFSLSTPSPLETNHSLGKDDLRPSSPLL) are Extracellular-facing. Asn6 and Asn21 each carry an N-linked (GlcNAc...) asparagine glycan. Residues 37-63 (SVFGVLILTLLGFLVAATFAWNLLVLA) traverse the membrane as a helical segment. Over 64 to 76 (TILRVRTFHRVPH) the chain is Cytoplasmic. Residues 77–103 (NLVASMAVSDVLVAALVMPLSLVHELS) form a helical membrane-spanning segment. Over 104 to 114 (GRRWQLGRRLC) the chain is Extracellular. Cys114 and Cys192 form a disulfide bridge. The chain crosses the membrane as a helical span at residues 115 to 137 (QLWIACDVLCCTASIWNVTAIAL). Position 121 (Asp121) interacts with serotonin. At 138 to 155 (DRYWSITRHMEYTLRTRK) the chain is on the cytoplasmic side. Residues 156–176 (CVSNVMIALTWALSAVISLAP) form a helical membrane-spanning segment. The Extracellular portion of the chain corresponds to 177–198 (LLFGWGETYSEGSEECQVSREP). A helical membrane pass occupies residues 199–220 (SYAVFSTVGAFYLPLCVVLFVY). Residues 221–287 (WKIYKAAKFR…QKEQRAALMV (67 aa)) lie on the Cytoplasmic side of the membrane. The helical transmembrane segment at 288–312 (GILIGVFVLCWIPFFLTELISPLCS) threads the bilayer. Topologically, residues 313 to 314 (CD) are extracellular. Residues 315-339 (IPAIWKSIFLWLGYSNSFFNPLIYT) form a helical membrane-spanning segment. Over 340–357 (AFNKNYNSAFKNFFSRQH) the chain is Cytoplasmic.

This sequence belongs to the G-protein coupled receptor 1 family.

Its subcellular location is the cell membrane. Its function is as follows. G-protein coupled receptor for 5-hydroxytryptamine (serotonin), a biogenic hormone that functions as a neurotransmitter, a hormone and a mitogen. Also functions as a receptor for ergot alkaloid derivatives and other psychoactive substances. Ligand binding causes a conformation change that triggers signaling via guanine nucleotide-binding proteins (G proteins) and modulates the activity of downstream effectors. HTR5A is coupled to G(i)/G(o) G alpha proteins and mediates inhibitory neurotransmission: signaling inhibits adenylate cyclase activity and activates a phosphatidylinositol-calcium second messenger system that regulates the release of Ca(2+) ions from intracellular stores. The polypeptide is 5-hydroxytryptamine receptor 5A (Homo sapiens (Human)).